Consider the following 651-residue polypeptide: MSEKLYPVLPEAKKNTLIDNETYLEWYEESVSDPDGFWAKHGRRIDWFKPFTKVKNTDFNGDVTIKWYEDGVTNVSYNCIDRHLKSRGDKVAIIWEGDNPYIDKKITYRELYENVCRMANVLKKHGVKKGDRVTIYLPMIPEAAYAMLACARIGAVHSVVFAGFSPEALAGRIVDCESTFVITADEGVRGGKPVALKENTDTAIDIAAKQYVMVNKVLVVRRTGGKVSWGRGRDLWYHQEVASVEPHCEPEPMNAEDPLFILYTSGSTGKPKGVLHTTGGYLVYASMTHQYVFDYHDGEIYWCTADVGWVTGHSYIVYGPLANGATTLMFEGVPNFPDQGRFWEVVDKHHVNIFYTAPTALRALMGAGDEFVTRSSRSTLRLLGSVGEPINPEAWEWYYNVVGDQKCPIVDTWWQTENGGILITPLPGATDLKPGSATRPFFGVKPVLVDNEGNVQEGVADGNLCISDSWPGQMRTVYGDHKRFIETYFSTYKGMYFSGDGCRRDEDGYYWITGRVDDVLNISGHRLGTAEIESALVSHHSVSEAAVVGYPHPIKGQGIYCYVTLMTGADAQDPDELRKELVQHVRKEIGPIATPDKIQFAPGLPKTRSGKIMRRILRKIAEDEFGALGDTSTLADRGVVDDLIENRQNKK.

CoA is bound by residues 189 to 192, threonine 311, and asparagine 335; that span reads RGGK. ATP is bound by residues 387–389, 411–416, aspartate 500, and arginine 515; these read GEP and DTWWQT. Serine 523 lines the CoA pocket. Arginine 526 serves as a coordination point for ATP. 3 residues coordinate Mg(2+): valine 537, histidine 539, and valine 542. Residue arginine 586 coordinates CoA. Residue lysine 611 is modified to N6-acetyllysine.

This sequence belongs to the ATP-dependent AMP-binding enzyme family. The cofactor is Mg(2+). Acetylated. Deacetylation by the SIR2-homolog deacetylase activates the enzyme.

It catalyses the reaction acetate + ATP + CoA = acetyl-CoA + AMP + diphosphate. Catalyzes the conversion of acetate into acetyl-CoA (AcCoA), an essential intermediate at the junction of anabolic and catabolic pathways. AcsA undergoes a two-step reaction. In the first half reaction, AcsA combines acetate with ATP to form acetyl-adenylate (AcAMP) intermediate. In the second half reaction, it can then transfer the acetyl group from AcAMP to the sulfhydryl group of CoA, forming the product AcCoA. The polypeptide is Acetyl-coenzyme A synthetase (Brucella melitensis biotype 1 (strain ATCC 23456 / CCUG 17765 / NCTC 10094 / 16M)).